The primary structure comprises 369 residues: Peptide chain release factor 2 (369 aa).

Q251 is modified (N5-methylglutamine).

This sequence belongs to the prokaryotic/mitochondrial release factor family. In terms of processing, methylated by PrmC. Methylation increases the termination efficiency of RF2.

The protein resides in the cytoplasm. Peptide chain release factor 2 directs the termination of translation in response to the peptide chain termination codons UGA and UAA. The protein is Peptide chain release factor 2 of Chlamydia trachomatis serovar A (strain ATCC VR-571B / DSM 19440 / HAR-13).